A 508-amino-acid polypeptide reads, in one-letter code: Probable cytosol aminopeptidase (508 aa).

The Mn(2+) site is built by lysine 276 and aspartate 281. The active site involves lysine 288. Mn(2+) contacts are provided by aspartate 299, aspartate 358, and glutamate 360. The active site involves arginine 362.

It belongs to the peptidase M17 family. It depends on Mn(2+) as a cofactor.

It localises to the cytoplasm. The enzyme catalyses Release of an N-terminal amino acid, Xaa-|-Yaa-, in which Xaa is preferably Leu, but may be other amino acids including Pro although not Arg or Lys, and Yaa may be Pro. Amino acid amides and methyl esters are also readily hydrolyzed, but rates on arylamides are exceedingly low.. The catalysed reaction is Release of an N-terminal amino acid, preferentially leucine, but not glutamic or aspartic acids.. Presumably involved in the processing and regular turnover of intracellular proteins. Catalyzes the removal of unsubstituted N-terminal amino acids from various peptides. The sequence is that of Probable cytosol aminopeptidase from Chlorobium luteolum (strain DSM 273 / BCRC 81028 / 2530) (Pelodictyon luteolum).